A 383-amino-acid chain; its full sequence is Delta(12)-fatty-acid desaturase FAD2 (383 aa).

2 consecutive transmembrane segments (helical) span residues 56–76 (VVYD…YFHL) and 84–104 (VAWP…WVIA). Residues 105–109 (HECGH) carry the Histidine box-1 motif. A helical membrane pass occupies residues 117-137 (LLDDIVGLVLHSCLLVPYFSW). A Histidine box-2 motif is present at residues 141–145 (HRRHH). 3 consecutive transmembrane segments (helical) span residues 179–199 (LFTL…FNVS), 225–245 (IYIS…LAAA), and 249–269 (AWVI…LVMI). The short motif at 315-319 (HVAHH) is the Histidine box-3 element.

It belongs to the fatty acid desaturase type 1 family. As to expression, expressed in leaves and seeds.

The protein localises to the endoplasmic reticulum membrane. The catalysed reaction is (9Z)-octadecenoyl-CoA + 2 Fe(II)-[cytochrome b5] + O2 + 2 H(+) = (9Z,12Z)-octadecadienoyl-CoA + 2 Fe(III)-[cytochrome b5] + 2 H2O. It carries out the reaction (9Z)-hexadecenoyl-CoA + 2 Fe(II)-[cytochrome b5] + O2 + 2 H(+) = (9Z,12Z)-hexadecadienoyl-CoA + 2 Fe(III)-[cytochrome b5] + 2 H2O. Its pathway is lipid metabolism; polyunsaturated fatty acid biosynthesis. Catalyzes the desaturation of oleic acid (18:1(9Z)) to linoleic acid (18:2(9Z,12Z)). The polypeptide is Delta(12)-fatty-acid desaturase FAD2 (Vernicia fordii (Tung)).